A 291-amino-acid chain; its full sequence is Ribosome maturation factor RimP (291 aa).

The segment at 188 to 291 is disordered; it reads ERGLGEDEEF…GGKPKAKETH (104 aa). Positions 193-211 are enriched in acidic residues; the sequence is EDEEFEDDADEVFEGDEAD. 2 stretches are compositionally biased toward basic and acidic residues: residues 212 to 237 and 245 to 254; these read EKAA…EKRA and AKSEKAEKSQ.

The protein belongs to the RimP family.

Its subcellular location is the cytoplasm. In terms of biological role, required for maturation of 30S ribosomal subunits. The polypeptide is Ribosome maturation factor RimP (Azorhizobium caulinodans (strain ATCC 43989 / DSM 5975 / JCM 20966 / LMG 6465 / NBRC 14845 / NCIMB 13405 / ORS 571)).